Consider the following 142-residue polypeptide: Large ribosomal subunit protein uL11 (142 aa).

Belongs to the universal ribosomal protein uL11 family. Part of the ribosomal stalk of the 50S ribosomal subunit. Interacts with L10 and the large rRNA to form the base of the stalk. L10 forms an elongated spine to which L12 dimers bind in a sequential fashion forming a multimeric L10(L12)X complex. In terms of processing, one or more lysine residues are methylated.

Functionally, forms part of the ribosomal stalk which helps the ribosome interact with GTP-bound translation factors. This is Large ribosomal subunit protein uL11 from Rhodospirillum rubrum (strain ATCC 11170 / ATH 1.1.1 / DSM 467 / LMG 4362 / NCIMB 8255 / S1).